Consider the following 1011-residue polypeptide: PE-PGRS family protein PE_PGRS30 (1011 aa).

In terms of domain architecture, PE spans 1 to 93; it reads MSFLLVEPDL…AAAYTGAEAA (93 aa). Residues 130-696 form a PGRS domain region; that stretch reads SNAGGNGGPG…GGTGGTGGVL (567 aa). Over residues 595-696 the composition is skewed to gly residues; it reads GGAGGTGGDH…GGTGGTGGVL (102 aa). The disordered stretch occupies residues 595–701; the sequence is GGAGGTGGDH…TGGVLFGQSG (107 aa). The segment at 697–1011 is C-terminal domain; that stretch reads FGQSGSSGPP…PTQLAQAIAP (315 aa).

It belongs to the mycobacterial PE family. PGRS subfamily.

It is found in the secreted. The protein resides in the cell wall. It localises to the cell surface. In terms of biological role, mediates suppression of pro-inflammatory immune response in macrophages via modulation of host cytokine response. Required for full virulence. Involved in inhibition of phago-lysosome fusion. This chain is PE-PGRS family protein PE_PGRS30, found in Mycobacterium tuberculosis (strain ATCC 25618 / H37Rv).